The primary structure comprises 508 residues: uncharacterized protein (508 aa).

Residues 7–29 (ALAIVLALILSLALPELLFQLYP) form a helical membrane-spanning segment.

The protein resides in the membrane. This is an uncharacterized protein from Archaeoglobus fulgidus (strain ATCC 49558 / DSM 4304 / JCM 9628 / NBRC 100126 / VC-16).